Consider the following 500-residue polypeptide: NAD(P)H-quinone oxidoreductase chain 4, chloroplastic (500 aa).

Helical transmembrane passes span 4-24 (FPWLTIIVVLPIFAGSFIFFL), 35-55 (YTICICTLELLLTTYAFCYHF), 87-107 (IGPVLLTGFITTLATLAAWPV), 113-130 (LFHFLMLAMYSGQIGSFS), 134-154 (LLLFFIMWELELIPVYLLLSM), 167-187 (FILYTAGGSIFLLMGVLGVGL), 207-227 (VALEIIFYIGFFIAFAVKLPI), 242-262 (HYSTCMLLAGILLKMGAYGLI), 272-292 (AHSIFSPWLMIVGTIQIIYAA), 305-325 (IAYSSVSHMGFILIGIASITD), 330-350 (GAILQIISHGFIGAALFFLAG), 386-406 (LALPGMSGFVAEVIVFLGIIT), 416-436 (IVITFVMAIGMILTPIYLLSM), and 462-482 (LFVSISIFLPVIGIGMYPDFV).

Belongs to the complex I subunit 4 family.

Its subcellular location is the plastid. It localises to the chloroplast thylakoid membrane. The enzyme catalyses a plastoquinone + NADH + (n+1) H(+)(in) = a plastoquinol + NAD(+) + n H(+)(out). It catalyses the reaction a plastoquinone + NADPH + (n+1) H(+)(in) = a plastoquinol + NADP(+) + n H(+)(out). The polypeptide is NAD(P)H-quinone oxidoreductase chain 4, chloroplastic (Guizotia abyssinica (Niger)).